The chain runs to 336 residues: Vacuolar protein sorting-associated protein 26B (336 aa).

Residues Ser302, Ser304, and Ser319 each carry the phosphoserine modification.

Belongs to the VPS26 family. Component of the heterotrimeric retromer cargo-selective complex (CSC), also described as vacuolar protein sorting subcomplex (VPS), formed by VPS26 (VPS26A or VPS26B), VPS29 and VPS35. The CSC has a highly elongated structure with VPS26 and VPS29 binding independently at opposite distal ends of VPS35 as central platform. The CSC is believed to associate with variable sorting nexins to form functionally distinct retromer complex variants. The originally described SNX-BAR retromer is a pentamer containing the CSC and a heterodimeric membrane-deforming subcomplex formed between SNX1 or SNX2 and SNX5 or SNX6 (also called SNX-BAR subcomplex); the respective CSC and SNX-BAR subcomplexes associate with low affinity. The CSC associates with SNX3 to form a SNX3-retromer complex. The CSC associates with SNX27, the WASH complex and the SNX-BAR subcomplex to form the SNX27-retromer complex. Interacts with VPS29, VPS35, TBC1D5, GOLPH3, SNX27. Ubiquitously expressed in developing embryo and adult. Highly expressed in brain.

It is found in the cytoplasm. The protein localises to the membrane. The protein resides in the early endosome. It localises to the late endosome. In terms of biological role, acts as a component of the retromer cargo-selective complex (CSC). The CSC is believed to be the core functional component of retromer or respective retromer complex variants acting to prevent missorting of selected transmembrane cargo proteins into the lysosomal degradation pathway. The recruitment of the CSC to the endosomal membrane involves RAB7A and SNX3. The SNX-BAR retromer mediates retrograde transport of cargo proteins from endosomes to the trans-Golgi network (TGN) and is involved in endosome-to-plasma membrane transport for cargo protein recycling. The SNX3-retromer mediates the retrograde transport of WLS distinct from the SNX-BAR retromer pathway. The SNX27-retromer is believed to be involved in endosome-to-plasma membrane trafficking and recycling of a broad spectrum of cargo proteins. The CSC seems to act as recruitment hub for other proteins, such as the WASH complex and TBC1D5. May be involved in retrograde transport of SORT1 but not of IGF2R. Acts redundantly with VSP26A in SNX-27 mediated endocytic recycling of SLC2A1/GLUT1. This Mus musculus (Mouse) protein is Vacuolar protein sorting-associated protein 26B (Vps26b).